The chain runs to 377 residues: Flagellin D (377 aa).

A coiled-coil region spans residues 104–128 (NSKADRVAIQEEVTALNDELNRIAE).

It belongs to the bacterial flagellin family. As to quaternary structure, heteromer of multiple flagellin subunits including FlaA, FlaB, FlaC, FlaD and possibly FlaE.

It localises to the secreted. The protein localises to the bacterial flagellum. Flagellin is the subunit protein which polymerizes to form the filaments of bacterial flagella. FlaD is not essential for flagellar synthesis and motility. May have a role in virulence unrelated to motility. The polypeptide is Flagellin D (flaD) (Vibrio anguillarum (Listonella anguillarum)).